The primary structure comprises 139 residues: Chemical-damaging agent resistance protein B (139 aa).

Belongs to the CAPAB/TerDEXZ family.

Its function is as follows. Not known; could confer methyl methane sulfonate (MMS), mitomycin C (MC), and UV resistance. The sequence is that of Chemical-damaging agent resistance protein B from Clostridium acetobutylicum.